The primary structure comprises 85 residues: Small ribosomal subunit protein uS17 (85 aa).

It belongs to the universal ribosomal protein uS17 family. As to quaternary structure, part of the 30S ribosomal subunit.

Functionally, one of the primary rRNA binding proteins, it binds specifically to the 5'-end of 16S ribosomal RNA. The chain is Small ribosomal subunit protein uS17 from Mycoplasma pneumoniae (strain ATCC 29342 / M129 / Subtype 1) (Mycoplasmoides pneumoniae).